A 245-amino-acid polypeptide reads, in one-letter code: Polyhedrin (245 aa).

This sequence belongs to the polyhedrin family.

Functionally, major component of the virus occlusion bodies, which are large proteinaceous structures (polyhedra), that protect the virus from the outside environment for extended periods until they are ingested by insect larvae. The polypeptide is Polyhedrin (PH) (Orgyia pseudotsugata multicapsid polyhedrosis virus (OpMNPV)).